The chain runs to 167 residues: CASP-like protein 3 (167 aa).

Residues 1 to 2 (MK) are Cytoplasmic-facing. Residues 3–23 (IIAIAPRIGAAVLSLVAFSVM) form a helical membrane-spanning segment. The Extracellular portion of the chain corresponds to 24-48 (ASTGERRSGAGSTFKVKFSDFQAYN). Residues 49–69 (YLIALNVILFVYSTVQLVMLV) traverse the membrane as a helical segment. At 70-80 (NSNHNSSFSSP) the chain is on the cytoplasmic side. A helical membrane pass occupies residues 81 to 101 (FKWVLGVYICDQLLAFLLFSA). Residues 102-137 (SSSAATASELSRHGLHNIWPPACATWKLWTFCSKAE) are Extracellular-facing. The chain crosses the membrane as a helical span at residues 138–158 (AAVAMSFLSSFFIITSSILSG). Residues 159–167 (YHLSKVPAV) lie on the Cytoplasmic side of the membrane.

This sequence belongs to the Casparian strip membrane proteins (CASP) family. As to quaternary structure, homodimer and heterodimers.

It is found in the cell membrane. The chain is CASP-like protein 3 from Osmunda lancea (Fern).